Consider the following 358-residue polypeptide: tRNA-specific 2-thiouridylase MnmA (358 aa).

Residues 7–14 (AMSGGVDS) and Leu33 each bind ATP. Cys101 acts as the Nucleophile in catalysis. The cysteines at positions 101 and 197 are disulfide-linked. Position 125 (Gly125) interacts with ATP. The segment at 147 to 149 (KDQ) is interaction with tRNA. Cys197 acts as the Cysteine persulfide intermediate in catalysis.

It belongs to the MnmA/TRMU family.

The protein localises to the cytoplasm. The enzyme catalyses S-sulfanyl-L-cysteinyl-[protein] + uridine(34) in tRNA + AH2 + ATP = 2-thiouridine(34) in tRNA + L-cysteinyl-[protein] + A + AMP + diphosphate + H(+). Functionally, catalyzes the 2-thiolation of uridine at the wobble position (U34) of tRNA, leading to the formation of s(2)U34. The protein is tRNA-specific 2-thiouridylase MnmA of Rickettsia prowazekii (strain Madrid E).